Here is a 539-residue protein sequence, read N- to C-terminus: Phosphoenolpyruvate carboxykinase (ATP) (539 aa).

Residues Arg64, Tyr206, and Lys212 each coordinate substrate. Residues Lys212, His231, and 247-255 each bind ATP; that span reads GLSGTGKTT. Mn(2+) is bound by residues Lys212 and His231. Asp268 provides a ligand contact to Mn(2+). ATP is bound by residues Glu296, Arg332, 448 to 449, and Thr454; that span reads RI. Arg332 is a binding site for substrate.

Belongs to the phosphoenolpyruvate carboxykinase (ATP) family. In terms of assembly, monomer. Mn(2+) is required as a cofactor.

Its subcellular location is the cytoplasm. It catalyses the reaction oxaloacetate + ATP = phosphoenolpyruvate + ADP + CO2. Its pathway is carbohydrate biosynthesis; gluconeogenesis. Its function is as follows. Involved in the gluconeogenesis. Catalyzes the conversion of oxaloacetate (OAA) to phosphoenolpyruvate (PEP) through direct phosphoryl transfer between the nucleoside triphosphate and OAA. This chain is Phosphoenolpyruvate carboxykinase (ATP), found in Yersinia enterocolitica serotype O:8 / biotype 1B (strain NCTC 13174 / 8081).